The primary structure comprises 419 residues: Chaperone protein dnaJ 2 (419 aa).

A J domain is found at 14–75 (KFYEILGVPK…EKREIYDQYG (62 aa)). A CR-type zinc finger spans residues 136–220 (GTTKKLSLSR…CKGEKVVSEK (85 aa)). Zn(2+)-binding residues include Cys-149, Cys-152, Cys-165, Cys-168, Cys-192, Cys-195, Cys-208, and Cys-211. CXXCXGXG motif repeat units lie at residues 149–156 (CSKCNGKG), 165–172 (CGGCQGSG), 192–199 (CNDCKGTG), and 208–215 (CPQCKGEK). The segment covering 378–391 (TTLHDVNIEDEMKR) has biased composition (basic and acidic residues). Residues 378–419 (TTLHDVNIEDEMKRKAQAQREAYDDDEEDHPGGAQRVQCAQQ) form a disordered region. Cys-416 is modified (cysteine methyl ester). Cys-416 carries S-farnesyl cysteine lipidation. A propeptide spans 417–419 (AQQ) (removed in mature form).

This sequence belongs to the DnaJ family. A/I subfamily. As to quaternary structure, homodimer. Zn(2+) serves as cofactor. In terms of processing, farnesylated. As to expression, expressed in both etiolated and light-grown tissues.

It is found in the membrane. In terms of biological role, plays a continuous role in plant development probably in the structural organization of compartments. This chain is Chaperone protein dnaJ 2 (ATJ2), found in Arabidopsis thaliana (Mouse-ear cress).